Reading from the N-terminus, the 292-residue chain is Troponin I (292 aa).

At Ser-1 the chain carries N-acetylserine. The disordered stretch occupies residues 1 to 149 (SSLEERRAAR…GLGGLSPEKK (149 aa)). The span at 46-55 (YSAPAEPAYD) shows a compositional bias: low complexity. A compositionally biased stretch (basic and acidic residues) spans 58–134 (AENRRRQQQE…EARRMAEEQK (77 aa)). The segment at 237–250 (DTKGKFVKPVLRKV) is actin-binding. The segment at 255-292 (SKLDKIQRKEAKKSDFRDNLKSSREHEADKEGGEGENE) is disordered.

This sequence belongs to the troponin I family.

Functionally, troponin I is the inhibitory subunit of troponin, the thin filament regulatory complex which confers calcium-sensitivity to striated muscle actomyosin ATPase activity. This is Troponin I from Chlamys nipponensis akazara (Akazara scallop).